Here is a 104-residue protein sequence, read N- to C-terminus: COX assembly mitochondrial protein 1 (104 aa).

The 43-residue stretch at Gln10–Lys52 folds into the CHCH domain. 2 consecutive short sequence motifs (cx9C motif) follow at residues Cys13–Cys23 and Cys34–Cys44. Cystine bridges form between Cys13/Cys44 and Cys23/Cys34.

This sequence belongs to the CMC family.

It is found in the mitochondrion inner membrane. Required for mitochondrial cytochrome c oxidase (COX) assembly and respiration. This is COX assembly mitochondrial protein 1 (cmc1) from Schizosaccharomyces pombe (strain 972 / ATCC 24843) (Fission yeast).